Consider the following 360-residue polypeptide: 3-dehydroquinate synthase (360 aa).

NAD(+) contacts are provided by residues 71 to 76 (DGEQFK), 105 to 109 (GVIGD), 129 to 130 (TT), Lys-142, Lys-151, and 169 to 172 (FLKT). The Zn(2+) site is built by Glu-184, His-247, and His-264.

The protein belongs to the sugar phosphate cyclases superfamily. Dehydroquinate synthase family. It depends on NAD(+) as a cofactor. Requires Co(2+) as cofactor. Zn(2+) is required as a cofactor.

It localises to the cytoplasm. It catalyses the reaction 7-phospho-2-dehydro-3-deoxy-D-arabino-heptonate = 3-dehydroquinate + phosphate. Its pathway is metabolic intermediate biosynthesis; chorismate biosynthesis; chorismate from D-erythrose 4-phosphate and phosphoenolpyruvate: step 2/7. Its function is as follows. Catalyzes the conversion of 3-deoxy-D-arabino-heptulosonate 7-phosphate (DAHP) to dehydroquinate (DHQ). The sequence is that of 3-dehydroquinate synthase from Buchnera aphidicola subsp. Schizaphis graminum (strain Sg).